A 335-amino-acid chain; its full sequence is MLTKLFLKKKFEEYYSKNEVELPRKFKNREFAFVPLELLPDFVMHRHISFRSETDFRAYILSNVPAHIYFSSAYYERPAEDKMENKGWLGADLIFDIDADHLPVKAQSFEKALEMAKREIKKLTAVLRADFGIRDMKIYFSGGRGYHVHVHDEEFLSLGSAERREIVDYLRLNSPKIVVEDRFANSNAAKRVLNYLRKKLEEDERLTSKLKIKPADLKKEKLTKKVIRAVEKFDYSALSIYIDAPVTADVKRLIRLPGSLHGKTGLRVTEVEDIESFNPLKDALAFGDEAVVVKVARKLNLSIGDFSGKIYPGRVKLPEYAAVFLICRGDASYDS.

Active-site residues include Asp96, Asp98, and Asp243.

The protein belongs to the eukaryotic-type primase small subunit family. Heterodimer of a small subunit (PriS) and a large subunit (PriL). Mg(2+) serves as cofactor. Requires Mn(2+) as cofactor.

Catalytic subunit of DNA primase, an RNA polymerase that catalyzes the synthesis of short RNA molecules used as primers for DNA polymerase during DNA replication. The small subunit contains the primase catalytic core and has DNA synthesis activity on its own. Binding to the large subunit stabilizes and modulates the activity, increasing the rate of DNA synthesis while decreasing the length of the DNA fragments, and conferring RNA synthesis capability. The DNA polymerase activity may enable DNA primase to also catalyze primer extension after primer synthesis. May also play a role in DNA repair. The sequence is that of DNA primase small subunit PriS from Archaeoglobus fulgidus (strain ATCC 49558 / DSM 4304 / JCM 9628 / NBRC 100126 / VC-16).